Reading from the N-terminus, the 278-residue chain is Transmembrane protein 41B (278 aa).

A disordered region spans residues 1–31; it reads MQVHERSHTGGHTFQCNHGNEKKAPAAGKVH. Helical transmembrane passes span 39-59, 96-116, 142-162, 184-204, 212-232, and 249-269; these read MSLLILVSIFLCAASVMFLVY, FYVEVLVAYFTTYIFLQTFAI, CSGLGASFCYLLSYLVGRPVV, LINYIIFLRITPFLPNWFINI, PLKVFFLGTFIGVAPPSFVAI, and SWNSVIILMVLAVLSILPAIF. Residues 127–238 are VTT domain; required for its function in autophagy; that stretch reads GFLYPFPLAL…FVAIKAGTTL (112 aa).

This sequence belongs to the TMEM41 family.

The protein localises to the endoplasmic reticulum membrane. It localises to the endomembrane system. It catalyses the reaction a 1,2-diacyl-sn-glycero-3-phospho-L-serine(in) = a 1,2-diacyl-sn-glycero-3-phospho-L-serine(out). It carries out the reaction cholesterol(in) = cholesterol(out). The enzyme catalyses a 1,2-diacyl-sn-glycero-3-phosphocholine(in) = a 1,2-diacyl-sn-glycero-3-phosphocholine(out). The catalysed reaction is a 1,2-diacyl-sn-glycero-3-phosphoethanolamine(in) = a 1,2-diacyl-sn-glycero-3-phosphoethanolamine(out). Functionally, phospholipid scramblase involved in lipid homeostasis and membrane dynamics processes. Has phospholipid scramblase activity toward cholesterol and phosphatidylserine, as well as phosphatidylethanolamine and phosphatidylcholine. Required for autophagosome formation: participates in early stages of autophagosome biogenesis at the endoplasmic reticulum (ER) membrane by reequilibrating the leaflets of the ER as lipids are extracted by atg2 (atg2a or atg2b) to mediate autophagosome assembly. In addition to autophagy, involved in other processes in which phospholipid scramblase activity is required. Required for normal motor neuron development. This chain is Transmembrane protein 41B, found in Xenopus laevis (African clawed frog).